Here is a 425-residue protein sequence, read N- to C-terminus: GPI mannosyltransferase 1 (425 aa).

9 helical membrane passes run valine 11–alanine 31, phenylalanine 85–alanine 105, leucine 144–alanine 164, valine 166–valine 186, isoleucine 233–leucine 253, phenylalanine 295–leucine 315, serine 340–methionine 360, isoleucine 367–leucine 387, and glycine 398–valine 418.

It belongs to the PIGM family.

Its subcellular location is the endoplasmic reticulum membrane. It functions in the pathway glycolipid biosynthesis; glycosylphosphatidylinositol-anchor biosynthesis. Functionally, mannosyltransferase involved in glycosylphosphatidylinositol-anchor biosynthesis. Transfers the first alpha-1,4-mannose to GlcN-acyl-PI during GPI precursor assembly. Required for cell wall integrity. The chain is GPI mannosyltransferase 1 (gpi14) from Aspergillus fumigatus (strain ATCC MYA-4609 / CBS 101355 / FGSC A1100 / Af293) (Neosartorya fumigata).